The following is a 1076-amino-acid chain: DNA-directed RNA polymerase subunit beta (1076 aa).

This sequence belongs to the RNA polymerase beta chain family. In plastids the minimal PEP RNA polymerase catalytic core is composed of four subunits: alpha, beta, beta', and beta''. When a (nuclear-encoded) sigma factor is associated with the core the holoenzyme is formed, which can initiate transcription.

The protein localises to the plastid. Its subcellular location is the chloroplast. The catalysed reaction is RNA(n) + a ribonucleoside 5'-triphosphate = RNA(n+1) + diphosphate. Functionally, DNA-dependent RNA polymerase catalyzes the transcription of DNA into RNA using the four ribonucleoside triphosphates as substrates. The protein is DNA-directed RNA polymerase subunit beta of Hordeum vulgare (Barley).